A 61-amino-acid chain; its full sequence is Short neurotoxin 1 (61 aa).

4 disulfides stabilise this stretch: C3-C23, C17-C40, C42-C53, and C54-C59.

Belongs to the three-finger toxin family. Short-chain subfamily. Type I alpha-neurotoxin sub-subfamily. Expressed by the venom gland.

The protein localises to the secreted. Its function is as follows. Binds to muscle nicotinic acetylcholine receptor (nAChR) and inhibit acetylcholine from binding to the receptor, thereby impairing neuromuscular transmission. Functionally, produces peripheral paralysis by blocking neuromuscular transmission at the postsynaptic site. Binds to the muscular nicotinic acetylcholine receptor. This Naja annulifera (Banded Egyptian cobra) protein is Short neurotoxin 1.